Reading from the N-terminus, the 99-residue chain is Malonate decarboxylase acyl carrier protein (99 aa).

The residue at position 25 (serine 25) is an O-(phosphoribosyl dephospho-coenzyme A)serine.

The protein belongs to the MdcC family. In terms of processing, covalently binds the prosthetic group of malonate decarboxylase.

The protein localises to the cytoplasm. Functionally, subunit of malonate decarboxylase, it is an acyl carrier protein to which acetyl and malonyl thioester residues are bound via a 2'-(5''-phosphoribosyl)-3'-dephospho-CoA prosthetic group and turn over during the catalytic mechanism. The chain is Malonate decarboxylase acyl carrier protein from Pseudomonas aeruginosa (strain UCBPP-PA14).